A 494-amino-acid chain; its full sequence is Glutamyl-tRNA(Gln) amidotransferase subunit A (494 aa).

Residues K80 and S160 each act as charge relay system in the active site. The segment at 140–168 (GNVISPWRRPGDTAPLAPGGSSGGSSSAV) is disordered. The active-site Acyl-ester intermediate is the S184.

Belongs to the amidase family. GatA subfamily. In terms of assembly, heterotrimer of A, B and C subunits.

The enzyme catalyses L-glutamyl-tRNA(Gln) + L-glutamine + ATP + H2O = L-glutaminyl-tRNA(Gln) + L-glutamate + ADP + phosphate + H(+). Allows the formation of correctly charged Gln-tRNA(Gln) through the transamidation of misacylated Glu-tRNA(Gln) in organisms which lack glutaminyl-tRNA synthetase. The reaction takes place in the presence of glutamine and ATP through an activated gamma-phospho-Glu-tRNA(Gln). This Novosphingobium aromaticivorans (strain ATCC 700278 / DSM 12444 / CCUG 56034 / CIP 105152 / NBRC 16084 / F199) protein is Glutamyl-tRNA(Gln) amidotransferase subunit A.